Reading from the N-terminus, the 260-residue chain is Malonyl-[acyl-carrier protein] O-methyltransferase (260 aa).

The protein belongs to the methyltransferase superfamily.

The catalysed reaction is malonyl-[ACP] + S-adenosyl-L-methionine = malonyl-[ACP] methyl ester + S-adenosyl-L-homocysteine. The protein operates within cofactor biosynthesis; biotin biosynthesis. In terms of biological role, converts the free carboxyl group of a malonyl-thioester to its methyl ester by transfer of a methyl group from S-adenosyl-L-methionine (SAM). It allows to synthesize pimeloyl-ACP via the fatty acid synthetic pathway. This Haemophilus influenzae (strain ATCC 51907 / DSM 11121 / KW20 / Rd) protein is Malonyl-[acyl-carrier protein] O-methyltransferase.